A 258-amino-acid polypeptide reads, in one-letter code: MNKIKPKKRLGQHFLISKNVIEKIVDEINISKEDIIVEIGPGTGALTEEILLRNPKILYAIEIDTSVHPVLEEKFSIYSNFKLIKSDFFDVNLYELISDEEKIKLVGNLPYNVASLMIIDCAFKLDILEFCVFMIQKEVAEKLIAKPKTKDYTFLSVFIQTFFDIKYVMSVPARFFNPPPKVTSAVVKLTPKQNIAINNVKKYKNFISHLFQNRRKMIKSKIEEEMLNKAGISPNLRAEELSVEDFIRIFGVVENDDR.

His13, Leu15, Gly40, Glu62, Asp87, and Asn108 together coordinate S-adenosyl-L-methionine.

It belongs to the class I-like SAM-binding methyltransferase superfamily. rRNA adenine N(6)-methyltransferase family. RsmA subfamily.

The protein resides in the cytoplasm. The catalysed reaction is adenosine(1518)/adenosine(1519) in 16S rRNA + 4 S-adenosyl-L-methionine = N(6)-dimethyladenosine(1518)/N(6)-dimethyladenosine(1519) in 16S rRNA + 4 S-adenosyl-L-homocysteine + 4 H(+). In terms of biological role, specifically dimethylates two adjacent adenosines (A1518 and A1519) in the loop of a conserved hairpin near the 3'-end of 16S rRNA in the 30S particle. May play a critical role in biogenesis of 30S subunits. This chain is Ribosomal RNA small subunit methyltransferase A, found in Sulfurihydrogenibium sp. (strain YO3AOP1).